The following is a 250-amino-acid chain: tRNA (guanine-N(1)-)-methyltransferase (250 aa).

S-adenosyl-L-methionine is bound by residues G113 and 133-138 (VGDYVL).

Belongs to the RNA methyltransferase TrmD family. As to quaternary structure, homodimer.

The protein resides in the cytoplasm. The enzyme catalyses guanosine(37) in tRNA + S-adenosyl-L-methionine = N(1)-methylguanosine(37) in tRNA + S-adenosyl-L-homocysteine + H(+). Specifically methylates guanosine-37 in various tRNAs. The polypeptide is tRNA (guanine-N(1)-)-methyltransferase (Proteus mirabilis (strain HI4320)).